Here is a 408-residue protein sequence, read N- to C-terminus: Homogentisate geranylgeranyltransferase (408 aa).

Residues methionine 1–arginine 68 constitute a chloroplast transit peptide. A run of 9 helical transmembrane segments spans residues histidine 122–isoleucine 142, valine 149–glycine 169, serine 194–isoleucine 214, glycine 217–isoleucine 237, alanine 248–phenylalanine 268, leucine 286–isoleucine 306, valine 329–alanine 349, threonine 352–tryptophan 372, and valine 386–phenylalanine 406.

It belongs to the UbiA prenyltransferase family.

It localises to the plastid. It is found in the chloroplast membrane. It catalyses the reaction homogentisate + (2E,6E,10E)-geranylgeranyl diphosphate + H(+) = 6-geranylgeranyl-2-methylbenzene-1,4-diol + CO2 + diphosphate. It functions in the pathway cofactor biosynthesis; tocopherol biosynthesis. Functionally, involved in the synthesis of tocotrienol (vitamin E). Catalyzes the condensation of homogentisate and geranylgeranyl diphosphate to form 2-methyl-6-geranylgeranylbenzoquinol. Possesses low activity with phytyl diphosphate as substrate. The protein is Homogentisate geranylgeranyltransferase of Triticum aestivum (Wheat).